Consider the following 620-residue polypeptide: Arginine--tRNA ligase (620 aa).

The 'HIGH' region motif lies at 147 to 157 (ANPTGPIHIGG).

Belongs to the class-I aminoacyl-tRNA synthetase family. As to quaternary structure, monomer.

The protein resides in the cytoplasm. It carries out the reaction tRNA(Arg) + L-arginine + ATP = L-arginyl-tRNA(Arg) + AMP + diphosphate. The protein is Arginine--tRNA ligase of Bifidobacterium longum (strain NCC 2705).